The primary structure comprises 553 residues: Transcriptional regulator HilA (553 aa).

A DNA-binding region (ompR/PhoB-type) is located at residues 11–107 (NKKFVFDDFI…LYGQGYRFNR (97 aa)). 4-aspartylphosphate is present on Asp62. Residues 372-405 (ADIKYYYGWNLFMAGQLEEALQTINECLKLDPTR) form a TPR repeat.

Its function is as follows. The main transcriptional regulator of the Salmonella pathogenicity island 1 (SPI1) gene expression. Activates the expression of invasion genes by a direct action at their promoters and also indirectly by increasing the level of invF. Also binds upstream of prgH and directly activates the expression of prgHIJK operon. The chain is Transcriptional regulator HilA (hilA) from Salmonella paratyphi A (strain ATCC 9150 / SARB42).